Reading from the N-terminus, the 431-residue chain is Serine hydroxymethyltransferase 1 (431 aa).

(6S)-5,6,7,8-tetrahydrofolate contacts are provided by residues Leu127 and 131–133 (GHL). Position 236 is an N6-(pyridoxal phosphate)lysine (Lys236). Glu252 contributes to the (6S)-5,6,7,8-tetrahydrofolate binding site.

This sequence belongs to the SHMT family. As to quaternary structure, homodimer. It depends on pyridoxal 5'-phosphate as a cofactor.

It localises to the cytoplasm. It catalyses the reaction (6R)-5,10-methylene-5,6,7,8-tetrahydrofolate + glycine + H2O = (6S)-5,6,7,8-tetrahydrofolate + L-serine. The protein operates within one-carbon metabolism; tetrahydrofolate interconversion. Its pathway is amino-acid biosynthesis; glycine biosynthesis; glycine from L-serine: step 1/1. Functionally, catalyzes the reversible interconversion of serine and glycine with tetrahydrofolate (THF) serving as the one-carbon carrier. This reaction serves as the major source of one-carbon groups required for the biosynthesis of purines, thymidylate, methionine, and other important biomolecules. Also exhibits THF-independent aldolase activity toward beta-hydroxyamino acids, producing glycine and aldehydes, via a retro-aldol mechanism. The sequence is that of Serine hydroxymethyltransferase 1 from Rhizobium meliloti (strain 1021) (Ensifer meliloti).